The following is a 97-amino-acid chain: Acylphosphatase (97 aa).

In terms of domain architecture, Acylphosphatase-like spans 5-92 (RAHVWISGRV…GEFVRFEITF (88 aa)). Catalysis depends on residues Arg20 and Asn38.

It belongs to the acylphosphatase family.

The catalysed reaction is an acyl phosphate + H2O = a carboxylate + phosphate + H(+). This Syntrophobacter fumaroxidans (strain DSM 10017 / MPOB) protein is Acylphosphatase (acyP).